The sequence spans 407 residues: Tryptophan synthase beta chain (407 aa).

Lys-91 carries the N6-(pyridoxal phosphate)lysine modification.

This sequence belongs to the TrpB family. Tetramer of two alpha and two beta chains. It depends on pyridoxal 5'-phosphate as a cofactor.

It catalyses the reaction (1S,2R)-1-C-(indol-3-yl)glycerol 3-phosphate + L-serine = D-glyceraldehyde 3-phosphate + L-tryptophan + H2O. Its pathway is amino-acid biosynthesis; L-tryptophan biosynthesis; L-tryptophan from chorismate: step 5/5. Its function is as follows. The beta subunit is responsible for the synthesis of L-tryptophan from indole and L-serine. This Streptococcus pneumoniae (strain JJA) protein is Tryptophan synthase beta chain.